Here is a 205-residue protein sequence, read N- to C-terminus: MANTLYDRTIAFAGICQAVALVQQVARDGHCDQDAFETSINAILNTSPANTIGVFGREADLKLGLECLVKGIDSTPSGSEVTRYIISLMALERKLSGRNDAMSQLGDRIQMAQRQTEHFELLDDQMISNLASIYLDVVSPIGPRIQVTGTPSVLQQTSNQHKVRALLLSGIRSAVLWRQVGGKRRHLIFGRKKMVEQAQILLARM.

It belongs to the HflD family.

It localises to the cytoplasm. It is found in the cell inner membrane. This is High frequency lysogenization protein HflD homolog from Vibrio campbellii (strain ATCC BAA-1116).